Here is a 481-residue protein sequence, read N- to C-terminus: Proton-coupled amino acid transporter 2 (481 aa).

At 1 to 56 (MSVTKSAGSPQVAATVKLDLVSFPESAKKVQSQDPNPVNGSSSESSEKTKGITGFQ) the chain is on the cytoplasmic side. The tract at residues 26–49 (SAKKVQSQDPNPVNGSSSESSEKT) is disordered. Residues 29–40 (KVQSQDPNPVNG) show a composition bias toward polar residues. Residues 57–77 (TLVHLVKGNMGTGILGLPLAV) form a helical membrane-spanning segment. The Extracellular portion of the chain corresponds to 78-79 (KN). Residues 80–100 (AGILMGPLSLLVMGLIACHCM) form a helical membrane-spanning segment. Topologically, residues 101–146 (HILVRCAQRFCHRLNKPFMDYGDTVMHGLASSPNTWLQSHAHWGRH) are cytoplasmic. The chain crosses the membrane as a helical span at residues 147–167 (AVSFFLIVTQLGFCCVYIVFL). Topologically, residues 168-195 (ADNLKQVVEAVNSTTISCHKNETVVLTP) are extracellular. The helical transmembrane segment at 196–216 (TIDSRLYMLAFLPVLGLLVFI) threads the bilayer. The Cytoplasmic portion of the chain corresponds to 217 to 220 (RNLR). A helical transmembrane segment spans residues 221 to 241 (VLTIFSLLANVSMLVSLVIIG). Topologically, residues 242-262 (QYIIQGIPDPSQLPLVASWKT) are extracellular. A helical membrane pass occupies residues 263 to 283 (YPLFFGTAIFSFESIGVVLPL). Residues 284-295 (ENKMKDARRFPT) lie on the Cytoplasmic side of the membrane. Residues 296–316 (ILSLGMSIITTLYIAIGALGY) form a helical membrane-spanning segment. The Extracellular segment spans residues 317–343 (LRFGDDIKASITLNLPNCWLYQSVKLL). Residues 344-364 (YVVGILCTHALQFYVPAEIII) form a helical membrane-spanning segment. The Cytoplasmic segment spans residues 365 to 377 (PLAVSQVSKRWAL). A helical transmembrane segment spans residues 378-398 (PVDLSIRLALVCVTCMLAILI). Residues 399 to 402 (PRLD) are Extracellular-facing. The helical transmembrane segment at 403-423 (LVLSLVGSVSSSALALIIPPL) threads the bilayer. Over 424–444 (LEVTTYYGEGMSPLTITKDAL) the chain is Cytoplasmic. Residues 445-465 (ISILGFMGFVVGTYQALDELI) traverse the membrane as a helical segment. Topologically, residues 466–481 (RSGNSLPLSNSTMFIQ) are extracellular.

This sequence belongs to the amino acid/polyamine transporter 2 family. As to expression, expressed in lung and spleen, and to a lower extent in brain, heart, kidney and skeletal muscle.

Its subcellular location is the cell membrane. The protein resides in the endoplasmic reticulum membrane. It localises to the recycling endosome membrane. It catalyses the reaction glycine(in) + H(+)(in) = glycine(out) + H(+)(out). The enzyme catalyses L-alanine(in) + H(+)(in) = L-alanine(out) + H(+)(out). It carries out the reaction D-alanine(in) + H(+)(in) = D-alanine(out) + H(+)(out). The catalysed reaction is L-proline(out) + H(+)(out) = L-proline(in) + H(+)(in). It catalyses the reaction D-proline(out) + H(+)(out) = D-proline(in) + H(+)(in). The enzyme catalyses 4-hydroxy-L-proline(in) + H(+)(in) = 4-hydroxy-L-proline(out) + H(+)(out). It carries out the reaction L-serine(in) + H(+)(in) = L-serine(out) + H(+)(out). The catalysed reaction is D-serine(out) + H(+)(out) = D-serine(in) + H(+)(in). It catalyses the reaction beta-alanine(in) + H(+)(in) = beta-alanine(out) + H(+)(out). The enzyme catalyses 4-aminobutanoate(in) + H(+)(in) = 4-aminobutanoate(out) + H(+)(out). It carries out the reaction sarcosine(in) + H(+)(in) = sarcosine(out) + H(+)(out). The catalysed reaction is N,N-dimethylglycine(in) + H(+)(in) = N,N-dimethylglycine(out) + H(+)(out). Its activity is regulated as follows. Inhibited by L- and D-pipecolic acid, nipecotic acid, isonipecotic acid, L- and D-cycloserine, and L-2-azetidine-carboxylate. In terms of biological role, electrogenic proton/amino acid symporter with a high selectivity for the small side chains amino acids glycine, alanine and proline, where both L- and D-enantiomers are transported. Extension of the backbone length, as in beta-alanine and 4-aminobutanoate or methylation of the amino group, as in sarcosine and N,N-dimethylglycine, are also tolerated but decrease transport efficiency. A free carboxyl group is preferred. In Rattus norvegicus (Rat), this protein is Proton-coupled amino acid transporter 2.